A 553-amino-acid chain; its full sequence is Cytokine-like nuclear factor N-PAC (553 aa).

The PWWP domain maps to 8–66 (LGDLVWGKLGRYPPWPGKIVNPPKDLKKPRGKKCFFVKFFGTEDHAWIKVEQLKPYHAH). 2 stretches are compositionally biased toward basic and acidic residues: residues 92–145 (RAKG…EGKK) and 162–182 (RAQE…KDLS). Residues 92–190 (RAKGKDQTSS…LSIPESSTVK (99 aa)) are disordered. At Ser-130 the chain carries Phosphoserine. Lys-135 participates in a covalent cross-link: Glycyl lysine isopeptide (Lys-Gly) (interchain with G-Cter in SUMO2). A Phosphoserine modification is found at Ser-167. Residues 168 to 180 (PRKRGRPPKDEKD) constitute a DNA-binding region (a.T hook). Residues Lys-176, Lys-179, Lys-201, and Lys-211 each participate in a glycyl lysine isopeptide (Lys-Gly) (interchain with G-Cter in SUMO2) cross-link. The interval 214 to 217 (DPHF) is interaction with histone H3. Residues 216–225 (HFHHFLLSQT) are interaction with KDM1B. Residues Lys-227, Lys-237, Lys-240, and Lys-269 each participate in a glycyl lysine isopeptide (Lys-Gly) (interchain with G-Cter in SUMO2) cross-link. Residues 261 to 553 (GSVTPTDKKI…MSAVYRAYIH (293 aa)) are dehydrogenase domain. 271–285 (GFLGLGLMGSGIVSN) lines the NAD(+) pocket. A Glycyl lysine isopeptide (Lys-Gly) (interchain with G-Cter in SUMO2) cross-link involves residue Lys-302. Thr-362 and Lys-505 together coordinate NAD(+). Ser-540 carries the phosphoserine modification.

It belongs to the HIBADH-related family. NP60 subfamily. In terms of assembly, homotetramere. Interacts with MAPK14. Interacts with KDM1B at nucleosomes; this interaction stimulates H3K4me1 and H3K4me2 demethylation. Binds to mononucleosomes. Interacts with GATA4; the interaction is required for a synergistic activation of GATA4 target genes transcription.

It is found in the nucleus. The protein resides in the chromosome. Its function is as follows. Cytokine-like nuclear factor with chromatin gene reader activity involved in chromatin modification and regulation of gene expression. Acts as a nucleosome-destabilizing factor that is recruited to genes during transcriptional activation. Recognizes and binds histone H3 without a preference for specific epigenetic markers and also binds DNA. Interacts with KDM1B and promotes its histone demethylase activity by facilitating the capture of H3 tails, they form a multifunctional enzyme complex that modifies transcribed chromatin and facilitates Pol II transcription through nucleosomes. Stimulates the acetylation of 'Lys-56' of nucleosomal histone H3 (H3K56ac) by EP300. With GATA4, co-binds a defined set of heart development genes and coregulates their expression during cardiomyocyte differentiation. Regulates p38 MAP kinase activity by mediating stress activation of MAPK14/p38alpha and specifically regulating MAPK14 signaling. Indirectly promotes phosphorylation of MAPK14 and activation of ATF2. The phosphorylation of MAPK14 requires upstream activity of MAP2K4 and MAP2K6. This Bos taurus (Bovine) protein is Cytokine-like nuclear factor N-PAC (GLYR1).